The following is a 361-amino-acid chain: Adenosine kinase (361 aa).

The Nuclear localization signal motif lies at 7–15; the sequence is PKPKKLKVE. An adenosine-binding site is contributed by aspartate 34. Serine 48 contributes to the Mg(2+) binding site. At tyrosine 76 the chain carries Phosphotyrosine. Asparagine 147 provides a ligand contact to Mg(2+). Residue glutamine 305 coordinates adenosine. Residue aspartate 316 is part of the active site. The active-site Proton acceptor is the aspartate 316.

Belongs to the carbohydrate kinase PfkB family. In terms of assembly, monomer. Mg(2+) serves as cofactor.

Its subcellular location is the nucleus. It carries out the reaction adenosine + ATP = AMP + ADP + H(+). The protein operates within purine metabolism; AMP biosynthesis via salvage pathway; AMP from adenosine: step 1/1. Catalyzes the phosphorylation of the purine nucleoside adenosine at the 5' position in an ATP-dependent manner. Serves as a potential regulator of concentrations of extracellular adenosine and intracellular adenine nucleotides. The polypeptide is Adenosine kinase (Adk) (Rattus norvegicus (Rat)).